A 520-amino-acid polypeptide reads, in one-letter code: Zinc finger and BTB domain-containing protein 45 (520 aa).

The 64-residue stretch at 33 to 96 (CDVTVRIREA…LYSGSLVVAQ (64 aa)) folds into the BTB domain. Disordered stretches follow at residues 182–272 (PAPP…GGAG) and 337–372 (FHLG…PDAA). The span at 206 to 225 (RGEEDDDEETDEETDAEEGE) shows a compositional bias: acidic residues. The segment covering 342 to 363 (PGPPAPTPPTPSGPAPAPPPTF) has biased composition (pro residues). 4 consecutive C2H2-type zinc fingers follow at residues 412 to 434 (YECS…MFIH), 440 to 462 (HQCA…MVTH), 468 to 490 (FQCA…MRTH), and 495 to 517 (APCP…LAAH).

Belongs to the krueppel C2H2-type zinc-finger protein family.

Its subcellular location is the nucleus. In terms of biological role, may be involved in transcriptional regulation. In the central nervous system, may play a role in glial cell differentiation. This chain is Zinc finger and BTB domain-containing protein 45, found in Mus musculus (Mouse).